We begin with the raw amino-acid sequence, 332 residues long: Glycerol-3-phosphate dehydrogenase [NAD(P)+] (332 aa).

W11, R30, and K108 together coordinate NADPH. The sn-glycerol 3-phosphate site is built by K108, G137, and S139. A141 contributes to the NADPH binding site. Residues K192, D245, S255, R256, and N257 each contribute to the sn-glycerol 3-phosphate site. The Proton acceptor role is filled by K192. R256 lines the NADPH pocket. The NADPH site is built by V280 and E282.

This sequence belongs to the NAD-dependent glycerol-3-phosphate dehydrogenase family.

It localises to the cytoplasm. It catalyses the reaction sn-glycerol 3-phosphate + NAD(+) = dihydroxyacetone phosphate + NADH + H(+). The enzyme catalyses sn-glycerol 3-phosphate + NADP(+) = dihydroxyacetone phosphate + NADPH + H(+). The protein operates within membrane lipid metabolism; glycerophospholipid metabolism. Functionally, catalyzes the reduction of the glycolytic intermediate dihydroxyacetone phosphate (DHAP) to sn-glycerol 3-phosphate (G3P), the key precursor for phospholipid synthesis. The protein is Glycerol-3-phosphate dehydrogenase [NAD(P)+] of Burkholderia multivorans (strain ATCC 17616 / 249).